The chain runs to 141 residues: Putative 8-oxo-dGTP diphosphatase 2 (141 aa).

A Nudix hydrolase domain is found at L2–N131. Mg(2+) is bound by residues G37, E52, E55, and E56. The short motif at G37–G58 is the Nudix box element.

The protein belongs to the Nudix hydrolase family. The cofactor is Mg(2+). Requires Mn(2+) as cofactor.

The catalysed reaction is 8-oxo-dGTP + H2O = 8-oxo-dGMP + diphosphate + H(+). May be involved in the GO system responsible for removing an oxidatively damaged form of guanine (7,8-dihydro-8-oxoguanine, 8-oxo-dGTP) from DNA and the nucleotide pool. 8-oxo-dGTP is inserted opposite dA and dC residues of template DNA with almost equal efficiency thus leading to A.T to G.C transversions. MutT specifically degrades 8-oxo-dGTP to the monophosphate. This chain is Putative 8-oxo-dGTP diphosphatase 2 (mutT2), found in Mycobacterium tuberculosis (strain CDC 1551 / Oshkosh).